The primary structure comprises 447 residues: Cysteine--tRNA ligase (447 aa).

Residue Cys-28 participates in Zn(2+) binding. A 'HIGH' region motif is present at residues 30–40; the sequence is PTVYNYIHIGN. Zn(2+)-binding residues include Cys-211, His-236, and Glu-240. Positions 268-272 match the 'KMSKS' region motif; it reads KMSKS. An ATP-binding site is contributed by Lys-271.

Belongs to the class-I aminoacyl-tRNA synthetase family. In terms of assembly, monomer. The cofactor is Zn(2+).

The protein localises to the cytoplasm. It carries out the reaction tRNA(Cys) + L-cysteine + ATP = L-cysteinyl-tRNA(Cys) + AMP + diphosphate. In Streptococcus agalactiae serotype III (strain NEM316), this protein is Cysteine--tRNA ligase.